The chain runs to 605 residues: Glutamine--fructose-6-phosphate aminotransferase [isomerizing] (605 aa).

The active-site Nucleophile; for GATase activity is Cys-2. In terms of domain architecture, Glutamine amidotransferase type-2 spans 2–216 (CGIVGIVGHQ…DGDWAVIGKT (215 aa)). 2 consecutive SIS domains span residues 280-420 (DSDA…ARGT) and 454-595 (LSRE…VDQP). The active-site For Fru-6P isomerization activity is Lys-600.

The protein resides in the cytoplasm. The enzyme catalyses D-fructose 6-phosphate + L-glutamine = D-glucosamine 6-phosphate + L-glutamate. In terms of biological role, involved in the production of the root hair deformation (HAD) factor specifically on medicago. The sequence is that of Glutamine--fructose-6-phosphate aminotransferase [isomerizing] (nodM) from Rhizobium meliloti (Ensifer meliloti).